The following is a 242-amino-acid chain: Uridylate kinase (242 aa).

13–16 (KLSG) is an ATP binding site. Position 55 (glycine 55) interacts with UMP. Glycine 56 and arginine 60 together coordinate ATP. UMP is bound by residues aspartate 75 and 136-143 (TGNPFFTT). ATP is bound by residues threonine 163, tyrosine 169, and aspartate 172.

It belongs to the UMP kinase family. In terms of assembly, homohexamer.

It is found in the cytoplasm. It catalyses the reaction UMP + ATP = UDP + ADP. It participates in pyrimidine metabolism; CTP biosynthesis via de novo pathway; UDP from UMP (UMPK route): step 1/1. Its activity is regulated as follows. Inhibited by UTP. Catalyzes the reversible phosphorylation of UMP to UDP. This Zymomonas mobilis subsp. mobilis (strain ATCC 31821 / ZM4 / CP4) protein is Uridylate kinase.